A 156-amino-acid polypeptide reads, in one-letter code: Small ribosomal subunit protein uS7 (156 aa).

It belongs to the universal ribosomal protein uS7 family. In terms of assembly, part of the 30S ribosomal subunit. Contacts proteins S9 and S11.

One of the primary rRNA binding proteins, it binds directly to 16S rRNA where it nucleates assembly of the head domain of the 30S subunit. Is located at the subunit interface close to the decoding center, probably blocks exit of the E-site tRNA. The sequence is that of Small ribosomal subunit protein uS7 from Geobacillus kaustophilus (strain HTA426).